We begin with the raw amino-acid sequence, 425 residues long: MIKQEFLKKMQEKKYFQDHRKVLIAVSGGLDSMTLLQLLIVSQKELAIELAIAHVNHKQRPESDQEEKALVKIAEQLGVKIFTSSFSGNFSENAARQFRYDFFGKVMQEGHYTALVTAHHADDQAETVFMRLLRGARLRHLSGMKAVQPFACGELIRPLLTFHKSDFPDIQHFEDSSNFQNDYLRNRIRNLYLPDLEKENPQFKDSLRYLGKEIEDWQTALSHLTRDLDIENVQVFHQQIPQVQRFLLQNYLENFSGLNLSKQQFEEVLNILQTKANYQHTLKKDYELVKDYQRFEIRKISRKPDLKMDSILLEFENLIEFGYYRFSFGIPLSGENIQKIFVSRETSLTLRFRKEGDSILLNGHHKKLRRLFIDKKVSFEERNSSVVVEQNHQILAILNIAISDLSKALKSDIMSTVLYIQKIDG.

ATP is bound at residue 27–32; that stretch reads SGGLDS.

It belongs to the tRNA(Ile)-lysidine synthase family.

The protein localises to the cytoplasm. The catalysed reaction is cytidine(34) in tRNA(Ile2) + L-lysine + ATP = lysidine(34) in tRNA(Ile2) + AMP + diphosphate + H(+). Ligates lysine onto the cytidine present at position 34 of the AUA codon-specific tRNA(Ile) that contains the anticodon CAU, in an ATP-dependent manner. Cytidine is converted to lysidine, thus changing the amino acid specificity of the tRNA from methionine to isoleucine. The sequence is that of tRNA(Ile)-lysidine synthase from Streptococcus sanguinis (strain SK36).